A 324-amino-acid chain; its full sequence is Probable pectinesterase A (324 aa).

The first 19 residues, 1–19 (MYLPSLVLGLLGFGLTAST), serve as a signal peptide directing secretion. An N-linked (GlcNAc...) asparagine glycan is attached at asparagine 27. Residue glutamine 142 participates in substrate binding. Aspartate 165 acts as the Proton donor in catalysis. Aspartate 186 functions as the Nucleophile in the catalytic mechanism. Substrate-binding residues include arginine 246 and tryptophan 248.

Belongs to the pectinesterase family.

It is found in the secreted. The enzyme catalyses [(1-&gt;4)-alpha-D-galacturonosyl methyl ester](n) + n H2O = [(1-&gt;4)-alpha-D-galacturonosyl](n) + n methanol + n H(+). The protein operates within glycan metabolism; pectin degradation; 2-dehydro-3-deoxy-D-gluconate from pectin: step 1/5. Involved in maceration and soft-rotting of plant tissue. This chain is Probable pectinesterase A (pmeA), found in Aspergillus fumigatus (strain CBS 144.89 / FGSC A1163 / CEA10) (Neosartorya fumigata).